Consider the following 55-residue polypeptide: Large ribosomal subunit protein bL33 (55 aa).

It belongs to the bacterial ribosomal protein bL33 family.

This chain is Large ribosomal subunit protein bL33, found in Caulobacter sp. (strain K31).